A 241-amino-acid chain; its full sequence is MLSESLTKTKLTDPLILDLLQNIRKHRSMLEDLKSIKIDPNLTNIISNEIGRELYIENEFHKAKGFRKLHIEVAEFSKNLRILHCVFFPDPKFDIPIFGMDLVKINDIVSAAIVDLSPASQNQALKYEKLLSGVDKSSFTSLREIPKWGRIFSNNVFFASLRNKSEKNDFCSVVDQYLSILIKLSKKAKPEFNEEIIQERIDFQKNYCAQQMKNEKTSMVLLKYFDEKWVNNYIKTVLFDF.

The protein belongs to the HY2 family.

It catalyses the reaction (2R,3Z)-phycocyanobilin + 4 oxidized [2Fe-2S]-[ferredoxin] = biliverdin IXalpha + 4 reduced [2Fe-2S]-[ferredoxin] + 4 H(+). Catalyzes the four-electron reduction of biliverdin IX-alpha (2-electron reduction at both the A and D rings); the reaction proceeds via an isolatable 2-electron intermediate, 181,182-dihydrobiliverdin. The chain is Phycocyanobilin:ferredoxin oxidoreductase from Prochlorococcus marinus (strain MIT 9301).